The following is a 728-amino-acid chain: Catalase-peroxidase 1 (728 aa).

The first 22 residues, 1–22 (MDKTQSSQGKCPVMHGANSAVA), serve as a signal peptide directing secretion. The segment at residues 97 to 225 (WHSAGTYRVA…LAAVMMGLIY (129 aa)) is a cross-link (tryptophyl-tyrosyl-methioninium (Trp-Tyr) (with M-251)). Histidine 98 acts as the Proton acceptor in catalysis. A cross-link (tryptophyl-tyrosyl-methioninium (Tyr-Met) (with W-97)) is located at residues 225–251 (YVNPEGVDGKPDPLRTAQDVRVTFARM). Residue histidine 266 participates in heme b binding.

It belongs to the peroxidase family. Peroxidase/catalase subfamily. As to quaternary structure, homodimer or homotetramer. Requires heme b as cofactor. In terms of processing, formation of the three residue Trp-Tyr-Met cross-link is important for the catalase, but not the peroxidase activity of the enzyme.

The enzyme catalyses H2O2 + AH2 = A + 2 H2O. It catalyses the reaction 2 H2O2 = O2 + 2 H2O. Its function is as follows. Bifunctional enzyme with both catalase and broad-spectrum peroxidase activity. This chain is Catalase-peroxidase 1, found in Shewanella sp. (strain MR-4).